A 158-amino-acid polypeptide reads, in one-letter code: S-ribosylhomocysteine lyase (158 aa).

Fe cation is bound by residues His-54, His-58, and Cys-124.

This sequence belongs to the LuxS family. In terms of assembly, homodimer. Requires Fe cation as cofactor.

It carries out the reaction S-(5-deoxy-D-ribos-5-yl)-L-homocysteine = (S)-4,5-dihydroxypentane-2,3-dione + L-homocysteine. In terms of biological role, involved in the synthesis of autoinducer 2 (AI-2) which is secreted by bacteria and is used to communicate both the cell density and the metabolic potential of the environment. The regulation of gene expression in response to changes in cell density is called quorum sensing. Catalyzes the transformation of S-ribosylhomocysteine (RHC) to homocysteine (HC) and 4,5-dihydroxy-2,3-pentadione (DPD). The protein is S-ribosylhomocysteine lyase of Lactobacillus johnsonii (strain CNCM I-12250 / La1 / NCC 533).